Here is an 88-residue protein sequence, read N- to C-terminus: Synaptonemal complex central element protein 3 (88 aa).

A coiled-coil region spans residues Glu-7 to Lys-75.

In terms of assembly, homodimer. Can form higher-order homooligomers. Interacts with SYCP1 (via tetrameric core); the interaction remodels SYCP1 homotetramers to 2:1 heterotrimers with SYCE3. SYCP1/SYCE3 heterotrimers form lattice assemblies as part of the mature synaptonemal complex via both lateral and head-to-head interactions. Interacts with the SYCE1-SIX6OS1 complex; the interaction recruits the SYCE1-SIX6OS1 complex to the central element of the synaptonemal complex. Interacts with the SYCE2-TEX12 complex; the interaction promotes fibrous assembly of SYCE2-TEX12 as part of the synaptonemal complex central element. Interacts with SYCE1. Interacts with SYCE2. Interacts with proteasome subunit PSMA8; to participate in meiosis progression during spermatogenesis. Interacts with SPO16.

It localises to the nucleus. The protein resides in the chromosome. In terms of biological role, major component of the transverse central element of synaptonemal complexes (SCS), formed between homologous chromosomes during meiotic prophase. Required for the assembly of the central element of the synaptonemal complex during meiosis, via remodeling of SYCP1 lattice structures and promoting recruitment of SYCE2-TEX12 and SYCE1-SIX60S1 complexes. Required for chromosome loading of the central element-specific SCS proteins, and for initiating synapsis between homologous chromosomes. Chromosome loading appears to require SYCP1. Required for fertility and normal testis development. This chain is Synaptonemal complex central element protein 3, found in Homo sapiens (Human).